We begin with the raw amino-acid sequence, 58 residues long: Ranakinin-N (58 aa).

Residues Met-1–Cys-22 form the signal peptide. Residues Glu-23 to Lys-43 constitute a propeptide that is removed on maturation. The segment at Lys-25 to Pro-58 is disordered. Basic and acidic residues predominate over residues Gly-35–Glu-46.

Expressed by the skin glands.

It localises to the secreted. In terms of biological role, induces contraction of intestinal smooth muscle in isolated guinea pig ileum. May induce relaxation of arterial smooth muscle. May target bradykinin receptors (BDKRB). Lacks antibacterial activity against the Gram-positive bacterium S.aureus and the Gram-negative bacteria E.coli and B.dysenteria, and antifungal activity against C.albicans. This chain is Ranakinin-N, found in Hylarana nigrovittata (Black-striped frog).